Consider the following 301-residue polypeptide: Probable alpha-L-glutamate ligase (301 aa).

An ATP-grasp domain is found at 104-287 (LQLLSRKGIG…VADMIFEFIE (184 aa)). ATP contacts are provided by residues Lys141, 178 to 179 (EF), Asp187, and 211 to 213 (RSN). Mg(2+)-binding residues include Asp248, Glu260, and Asn262. Positions 248, 260, and 262 each coordinate Mn(2+).

The protein belongs to the RimK family. Requires Mg(2+) as cofactor. Mn(2+) serves as cofactor.

The chain is Probable alpha-L-glutamate ligase from Vibrio atlanticus (strain LGP32) (Vibrio splendidus (strain Mel32)).